A 563-amino-acid chain; its full sequence is (R)-mandelonitrile lyase 1 (563 aa).

The N-terminal stretch at 1-27 (MEKSTMSAILLVLHLFVLLLQYSEVHS) is a signal peptide. Residues 63–64 (TS), 82–83 (ER), Val129, Thr133, and 137–140 (NAGV) contribute to the FAD site. N-linked (GlcNAc...) asparagine glycans are attached at residues Asn145 and Asn162. Residue Val244 participates in FAD binding. Residue Cys355 participates in substrate binding. N-linked (GlcNAc...) asparagine glycosylation is present at Asn379. Cysteines 426 and 477 form a disulfide. Tyr484 is a binding site for substrate. Residues 485–486 (WH) and Gly514 each bind FAD. His486 functions as the Proton donor in the catalytic mechanism. The Proton acceptor role is filled by His524. Residue 525-526 (PQ) coordinates FAD.

This sequence belongs to the GMC oxidoreductase family. Monomer. Requires FAD as cofactor. In terms of processing, glycosylated. In terms of tissue distribution, seeds. Localized within cotyledonary parenchyma cells.

The protein localises to the vacuole. It is found in the aleurone grain. It catalyses the reaction (R)-mandelonitrile = benzaldehyde + hydrogen cyanide. Functionally, involved in cyanogenesis, the release of HCN from injured tissues. Catalyzes the stereospecific addition of HCN to a variety of aldehydes in vitro. It is a major seed constituent, and could have the additional role of a storage form for reduced nitrogen. The protein is (R)-mandelonitrile lyase 1 (MDL1) of Prunus serotina (Black cherry).